We begin with the raw amino-acid sequence, 153 residues long: 6,7-dimethyl-8-ribityllumazine synthase (153 aa).

Residues Phe21, 55–57, and 79–81 each bind 5-amino-6-(D-ribitylamino)uracil; these read AFE and TVI. 84–85 is a (2S)-2-hydroxy-3-oxobutyl phosphate binding site; that stretch reads AT. His87 functions as the Proton donor in the catalytic mechanism. Phe112 is a binding site for 5-amino-6-(D-ribitylamino)uracil. A (2S)-2-hydroxy-3-oxobutyl phosphate-binding site is contributed by Arg126.

It belongs to the DMRL synthase family. In terms of assembly, forms an icosahedral capsid composed of 60 subunits, arranged as a dodecamer of pentamers.

It catalyses the reaction (2S)-2-hydroxy-3-oxobutyl phosphate + 5-amino-6-(D-ribitylamino)uracil = 6,7-dimethyl-8-(1-D-ribityl)lumazine + phosphate + 2 H2O + H(+). Its pathway is cofactor biosynthesis; riboflavin biosynthesis; riboflavin from 2-hydroxy-3-oxobutyl phosphate and 5-amino-6-(D-ribitylamino)uracil: step 1/2. In terms of biological role, catalyzes the formation of 6,7-dimethyl-8-ribityllumazine by condensation of 5-amino-6-(D-ribitylamino)uracil with 3,4-dihydroxy-2-butanone 4-phosphate. This is the penultimate step in the biosynthesis of riboflavin. In Bacillus anthracis (strain A0248), this protein is 6,7-dimethyl-8-ribityllumazine synthase.